The following is a 156-amino-acid chain: Small ribosomal subunit protein uS7 (156 aa).

The protein belongs to the universal ribosomal protein uS7 family. Part of the 30S ribosomal subunit. Contacts proteins S9 and S11.

Its function is as follows. One of the primary rRNA binding proteins, it binds directly to 16S rRNA where it nucleates assembly of the head domain of the 30S subunit. Is located at the subunit interface close to the decoding center, probably blocks exit of the E-site tRNA. This Clostridium botulinum (strain Kyoto / Type A2) protein is Small ribosomal subunit protein uS7.